A 175-amino-acid chain; its full sequence is ATP-dependent protease subunit HslV (175 aa).

Thr-2 is a catalytic residue. Na(+) is bound by residues Gly-158, Cys-161, and Thr-164.

The protein belongs to the peptidase T1B family. HslV subfamily. As to quaternary structure, a double ring-shaped homohexamer of HslV is capped on each side by a ring-shaped HslU homohexamer. The assembly of the HslU/HslV complex is dependent on binding of ATP.

Its subcellular location is the cytoplasm. The enzyme catalyses ATP-dependent cleavage of peptide bonds with broad specificity.. Its activity is regulated as follows. Allosterically activated by HslU binding. In terms of biological role, protease subunit of a proteasome-like degradation complex believed to be a general protein degrading machinery. The chain is ATP-dependent protease subunit HslV from Haemophilus influenzae (strain PittEE).